The sequence spans 1305 residues: Contactin-associated protein like 5-4 (1305 aa).

Residues 1–24 (MNSVRRLNSILTLVLSGLWHLGLT) form the signal peptide. Residues 25-1237 (ATNYNCDEPL…LTDTVQSDSA (1213 aa)) lie on the Extracellular side of the membrane. Residues 30–174 (CDEPLASFLS…IGMRVEVYGC (145 aa)) form the F5/8 type C domain. A disulfide bridge links Cys-30 with Cys-174. 2 Laminin G-like domains span residues 180 to 360 (IVGF…TFSC) and 367 to 544 (PITF…IDLC). An N-linked (GlcNAc...) asparagine glycan is attached at Asn-282. A disulfide bridge links Cys-329 with Cys-360. An N-linked (GlcNAc...) asparagine glycan is attached at Asn-496. Intrachain disulfides connect Cys-512–Cys-544, Cys-550–Cys-561, and Cys-555–Cys-570. One can recognise an EGF-like 1 domain in the interval 546–583 (IKDRCLPNYCEHGGHCAQNWTTFYCNCSDTGYTGATCH). The N-linked (GlcNAc...) asparagine glycan is linked to Asn-571. Residues Cys-572 and Cys-582 are joined by a disulfide bond. The Fibrinogen C-terminal domain occupies 584–790 (DSVYEQSCEV…LRCYGDRHFW (207 aa)). Asn-622 is a glycosylation site (N-linked (GlcNAc...) asparagine). Residues 791–956 (NAVSFTTEAS…KLMSGVTPGC (166 aa)) form the Laminin G-like 3 domain. 4 cysteine pairs are disulfide-bonded: Cys-929-Cys-956, Cys-960-Cys-973, Cys-967-Cys-982, and Cys-984-Cys-994. An EGF-like 2 domain is found at 957–995 (LGHCSSYGSNCLNGGKCVEKQSGYSCDCTNSPNEGPFCQ). The 185-residue stretch at 1014–1198 (EPYLVIKNTS…VQGTLTESGC (185 aa)) folds into the Laminin G-like 4 domain. N-linked (GlcNAc...) asparagine glycosylation is present at Asn-1057. Residues Cys-1163 and Cys-1198 are joined by a disulfide bond. The chain crosses the membrane as a helical span at residues 1238 to 1258 (VIGGIIALVTFVTFCVIGIMI). The Cytoplasmic portion of the chain corresponds to 1259-1305 (HFLYLHKQSHCTNQTKEKEYSENLSNSFRNAIDLQNTASECKREYFI).

This sequence belongs to the neurexin family.

It localises to the membrane. In terms of biological role, may play a role in the correct development and proper functioning of the peripheral and central nervous system and be involved in cell adhesion and intercellular communication. This chain is Contactin-associated protein like 5-4 (Cntnap5d), found in Rattus norvegicus (Rat).